We begin with the raw amino-acid sequence, 320 residues long: Transcription factor bHLH96 (320 aa).

The tract at residues 30–121 (EEEDQDPQDT…RSSKNKEEIE (92 aa)) is disordered. The segment covering 65 to 76 (YSDDYNYNEEDL) has biased composition (acidic residues). The span at 104–114 (GRRKRRRTRSS) shows a compositional bias: basic residues. Residues 122 to 173 (NQRMTHIAVERNRRKQMNEYLAVLRSLMPPYYAQRGDQASIVGGAINYLKEL) form the bHLH domain. Residues 184 to 206 (VKTATEDTGAGHDQTKTTSASSS) form a disordered region. The ACT domain maps to 244–320 (SLKILAKKRP…RRIEEESSFS (77 aa)).

Homodimer. In terms of tissue distribution, expressed constitutively in roots, leaves, stems, and flowers.

The protein resides in the nucleus. The chain is Transcription factor bHLH96 (BHLH96) from Arabidopsis thaliana (Mouse-ear cress).